The following is a 647-amino-acid chain: Paraneoplastic antigen Ma6E (647 aa).

Disordered stretches follow at residues 111–199 (QPQG…AGGA), 227–254 (GAAGEAGGAGEAGAAGEAGGAGEGRAAG), 508–580 (AAAP…VPWG), and 608–647 (RGQEARKPPLEGLQTILEEPENEDEDGAGDEGQPKSSQGK). Composition is skewed to gly residues over residues 122–149 (GEGGGAGEAGGVGEVGAAGEAGGTGEAG), 158–199 (GEAG…AGGA), and 227–251 (GAAGEAGGAGEAGAAGEAGGAGEGR). Residues 517–570 (PAAAQASPAQGNASEAGPGAEDAAEAASATKEAARGAPAAGEGESAPAGPEGLG) are compositionally biased toward low complexity. Acidic residues predominate over residues 625–636 (EEPENEDEDGAG).

The chain is Paraneoplastic antigen Ma6E from Homo sapiens (Human).